Reading from the N-terminus, the 268-residue chain is Undecaprenyl-diphosphatase (268 aa).

Helical transmembrane passes span 3 to 23, 46 to 66, 84 to 104, 107 to 127, 144 to 164, 184 to 204, 218 to 238, and 248 to 268; these read VFNL…EFIP, FEVL…SAKL, FGIL…HGFI, VLFE…FILL, YPLP…IPGV, AAEF…AYDL, LIGV…RYLL, and LFGW…LVWG.

The protein belongs to the UppP family.

It is found in the cell inner membrane. It catalyses the reaction di-trans,octa-cis-undecaprenyl diphosphate + H2O = di-trans,octa-cis-undecaprenyl phosphate + phosphate + H(+). Its function is as follows. Catalyzes the dephosphorylation of undecaprenyl diphosphate (UPP). Confers resistance to bacitracin. The protein is Undecaprenyl-diphosphatase of Brucella anthropi (strain ATCC 49188 / DSM 6882 / CCUG 24695 / JCM 21032 / LMG 3331 / NBRC 15819 / NCTC 12168 / Alc 37) (Ochrobactrum anthropi).